Here is a 220-residue protein sequence, read N- to C-terminus: 7-cyano-7-deazaguanine synthase 1 (220 aa).

Residue 10 to 20 (FSGGIDSTVLL) participates in ATP binding. Zn(2+) is bound by residues cysteine 183, cysteine 191, cysteine 194, and cysteine 197.

Belongs to the QueC family. Homodimer. Zn(2+) serves as cofactor.

It carries out the reaction 7-carboxy-7-deazaguanine + NH4(+) + ATP = 7-cyano-7-deazaguanine + ADP + phosphate + H2O + H(+). Its pathway is purine metabolism; 7-cyano-7-deazaguanine biosynthesis. Its function is as follows. Catalyzes the ATP-dependent conversion of 7-carboxy-7-deazaguanine (CDG) to 7-cyano-7-deazaguanine (preQ(0)). The protein is 7-cyano-7-deazaguanine synthase 1 of Desulfitobacterium hafniense (strain Y51).